A 542-amino-acid chain; its full sequence is Glucose-6-phosphate isomerase (542 aa).

The active-site Proton donor is E354. Active-site residues include H385 and K505.

It belongs to the GPI family.

The protein resides in the cytoplasm. It carries out the reaction alpha-D-glucose 6-phosphate = beta-D-fructose 6-phosphate. It participates in carbohydrate biosynthesis; gluconeogenesis. Its pathway is carbohydrate degradation; glycolysis; D-glyceraldehyde 3-phosphate and glycerone phosphate from D-glucose: step 2/4. In terms of biological role, catalyzes the reversible isomerization of glucose-6-phosphate to fructose-6-phosphate. In Nitrosospira multiformis (strain ATCC 25196 / NCIMB 11849 / C 71), this protein is Glucose-6-phosphate isomerase.